Reading from the N-terminus, the 169-residue chain is Peptide deformylase (169 aa).

Cysteine 91 and histidine 133 together coordinate Fe cation. Glutamate 134 is a catalytic residue. Histidine 137 is a binding site for Fe cation.

It belongs to the polypeptide deformylase family. The cofactor is Fe(2+).

It carries out the reaction N-terminal N-formyl-L-methionyl-[peptide] + H2O = N-terminal L-methionyl-[peptide] + formate. Its function is as follows. Removes the formyl group from the N-terminal Met of newly synthesized proteins. Requires at least a dipeptide for an efficient rate of reaction. N-terminal L-methionine is a prerequisite for activity but the enzyme has broad specificity at other positions. The chain is Peptide deformylase from Salmonella arizonae (strain ATCC BAA-731 / CDC346-86 / RSK2980).